We begin with the raw amino-acid sequence, 436 residues long: Methyl-accepting chemotaxis protein Amb0994 (436 aa).

Residues 1-8 lie on the Cytoplasmic side of the membrane; sequence METTLGSY. A helical membrane pass occupies residues 9 to 29; that stretch reads ARTLSLGMLVPSAICLLAGTF. Gly-30 is a topological domain (periplasmic). Residues 31–51 traverse the membrane as a helical segment; that stretch reads LLGGSSIALWVVIAVSLLGVV. Topologically, residues 52-436 are cytoplasmic; sequence GGVKIGGSAR…DGFIARIGGR (385 aa). Positions 180–416 constitute a Methyl-accepting transducer domain; sequence AATELEASSG…QVADAASELS (237 aa). At Gln-211 the chain carries Glutamate methyl ester (Gln). Glu-225 carries the post-translational modification Glutamate methyl ester (Glu). Residues 321 to 436 form a required for interaction with MamK and to respond to the magnetic field region; that stretch reads TEDITSQVAH…DGFIARIGGR (116 aa).

This sequence belongs to the methyl-accepting chemotaxis (MCP) protein family. Interacts with MamK at cell poles and septa.

It localises to the cell inner membrane. Functionally, probable methyl-accepting taxis protein. May be the receptor that senses the torque generated from the interaction between the magnetosome dipole moment and the external magnetic field. Overproduction interferes with magnetotaxis, cells respond more slowly to changes in the magnetic field; requires the MamK-interacting C-terminus of the protein. The effect of magnetic sensing is to control flagellar rotation. Chemotactic-signal transducers respond to changes in the concentration of attractants and repellents in the environment, transduce a signal from the outside to the inside of the cell, and facilitate sensory adaptation through variation of methylation levels. Attractants increase the level of methylation while repellents decrease the level of methylation. The polypeptide is Methyl-accepting chemotaxis protein Amb0994 (Paramagnetospirillum magneticum (strain ATCC 700264 / AMB-1) (Magnetospirillum magneticum)).